Consider the following 96-residue polypeptide: Defensin-like protein 69 (96 aa).

The N-terminal stretch at 1–19 is a signal peptide; that stretch reads MGSSKLLVAFTLIVMMTIS. 4 cysteine pairs are disulfide-bonded: cysteine 37–cysteine 86, cysteine 41–cysteine 64, cysteine 50–cysteine 84, and cysteine 54–cysteine 85.

The protein belongs to the DEFL family.

It localises to the secreted. The sequence is that of Defensin-like protein 69 from Arabidopsis thaliana (Mouse-ear cress).